The chain runs to 160 residues: Transcription factor 12 (160 aa).

A disordered region spans residues 1-58 (NKEKDENLHEPPSSDDMKSDDESSQKDIKVSSRGRTSTNEDEDLNPEQKIEREKERRM). Over residues 15–30 (DDMKSDDESSQKDIKV) the composition is skewed to basic and acidic residues. Ser19 carries the phosphoserine modification. Lys29 is covalently cross-linked (Glycyl lysine isopeptide (Lys-Gly) (interchain with G-Cter in SUMO2)). Phosphothreonine is present on Thr36. A Phosphoserine modification is found at Ser37. Residues 46–58 (PEQKIEREKERRM) show a composition bias toward basic and acidic residues. One can recognise a bHLH domain in the interval 55–108 (ERRMANNARERLRVRDINEAFKELGRMCQLHLKSEKPQTKLLILHQAVAVILSL). Residues Lys87 and Lys131 each participate in a glycyl lysine isopeptide (Lys-Gly) (interchain with G-Cter in SUMO2) cross-link. The interval 110–133 (QQVRERNLNPKAACLKRREEEKVS) is class A specific domain. The disordered stretch occupies residues 132–160 (VSVVSAEPPTTLPGTHPGLSETTNPMGHM). The span at 139–150 (PPTTLPGTHPGL) shows a compositional bias: low complexity. The span at 151–160 (SETTNPMGHM) shows a compositional bias: polar residues.

Efficient DNA binding requires dimerization with another bHLH protein. Forms homo- or heterooligomers with myogenin, E12 and ITF2 proteins. Interacts with PTF1A. Interacts with RUNX1T1. Interacts with NEUROD2. Interacts with BHLHA9.

The protein localises to the nucleus. Its function is as follows. Transcriptional regulator. Involved in the initiation of neuronal differentiation. Activates transcription by binding to the E box (5'-CANNTG-3'). May be involved in the functional network that regulates the development of the GnRH axis. This Papio hamadryas (Hamadryas baboon) protein is Transcription factor 12 (TCF12).